We begin with the raw amino-acid sequence, 756 residues long: Catalase-peroxidase (756 aa).

The segment at residues 91-244 (WHSAGTYRTG…LAAVQMGLIY (154 aa)) is a cross-link (tryptophyl-tyrosyl-methioninium (Trp-Tyr) (with M-270)). The active-site Proton acceptor is the His-92. The segment at 198–230 (AQKKMQQPGDGTLVAEPENHANEESRTASGERN) is disordered. Positions 214–223 (PENHANEESR) are enriched in basic and acidic residues. A cross-link (tryptophyl-tyrosyl-methioninium (Tyr-Met) (with W-91)) is located at residues 244–270 (YVNPEGPEGVPDPVASARDIRETFGRM). His-285 contributes to the heme b binding site. Residues 371–390 (KNGAGAGKIPDAHDPSKRHA) form a disordered region.

The protein belongs to the peroxidase family. Peroxidase/catalase subfamily. Homodimer or homotetramer. It depends on heme b as a cofactor. Post-translationally, formation of the three residue Trp-Tyr-Met cross-link is important for the catalase, but not the peroxidase activity of the enzyme.

It catalyses the reaction H2O2 + AH2 = A + 2 H2O. It carries out the reaction 2 H2O2 = O2 + 2 H2O. Functionally, bifunctional enzyme with both catalase and broad-spectrum peroxidase activity. The chain is Catalase-peroxidase from Pseudomonas syringae pv. tomato (strain ATCC BAA-871 / DC3000).